The chain runs to 78 residues: Conotoxin TsMEKL-P012 (78 aa).

Positions 1–19 (MEKLTILLLLAAVLVLAQA) are cleaved as a signal peptide. A propeptide spanning residues 20–38 (LIKKGGGEKRQKEKINFLS) is cleaved from the precursor. 3 disulfide bridges follow: Cys-52/Cys-66, Cys-59/Cys-70, and Cys-65/Cys-75.

Belongs to the conotoxin O2 superfamily. As to expression, expressed by the venom duct.

The protein localises to the secreted. The chain is Conotoxin TsMEKL-P012 from Conus tessulatus (Tessellate cone).